The sequence spans 92 residues: MPRSLKKGPFIDLHLLKKVEKAVESGDKKPIRTWSRRSTVFPNMIGLTIAVHNGRQHVPVFVSDEMVGHKLGEFAPTRTYRGHAADKKAKKR.

It belongs to the universal ribosomal protein uS19 family.

Its function is as follows. Protein S19 forms a complex with S13 that binds strongly to the 16S ribosomal RNA. The sequence is that of Small ribosomal subunit protein uS19 from Yersinia pestis (strain Pestoides F).